Reading from the N-terminus, the 77-residue chain is MSKTHPPELKKYMDKEMDLKLNGNRRVSGILRGFDPFMNMVIDEAVEYQKDGGSVNLGMTVIRGNSVVIMEPKERIS.

The Sm domain maps to threonine 4–isoleucine 76.

This sequence belongs to the snRNP Sm proteins family. As to quaternary structure, core component of the spliceosomal U1, U2, U4 and U5 small nuclear ribonucleoproteins (snRNPs), the building blocks of the spliceosome.

The protein localises to the cytoplasm. The protein resides in the cytosol. It is found in the nucleus. Functionally, plays a role in pre-mRNA splicing as a core component of the spliceosomal U1, U2, U4 and U5 small nuclear ribonucleoproteins (snRNPs), the building blocks of the spliceosome. The polypeptide is Probable small nuclear ribonucleoprotein G (snr-7) (Caenorhabditis elegans).